The primary structure comprises 1935 residues: Myosin heavy chain, fast skeletal muscle (1935 aa).

In terms of domain architecture, Myosin N-terminal SH3-like spans 32 to 81; the sequence is DAKTAFFVVDPDEMYLKGTLVSKEGGKATVKTHSGKTVTVKEDEIFPMNP. A Myosin motor domain is found at 85–779; the sequence is DKIEDMAMMT…LLGALEEMRD (695 aa). An N6,N6,N6-trimethyllysine modification is found at lysine 129. 178–185 is an ATP binding site; that stretch reads GESGAGKT. Actin-binding stretches follow at residues 659–681 and 761–775; these read LMTN…ESKT and HTKV…GALE. The region spanning 782 to 811 is the IQ domain; the sequence is LALLVTMTQALCRGYVMRKEFVKMMERRES. Residues 812–839 form a hinge region; that stretch reads IYSIQYNIRSFMNVKHWPWMKLYFKIKP. Residues 840 to 1935 adopt a coiled-coil conformation; that stretch reads LLKSAETEKE…RDAGKSKDEE (1096 aa). Disordered stretches follow at residues 1589–1608 and 1902–1935; these read RNSQ…EVRS and HELE…KDEE. Residues 1592–1603 show a composition bias toward polar residues; it reads QRVIDSMQSTLD. Basic and acidic residues-rich tracts occupy residues 1902–1913 and 1924–1935; these read HELEEAQERADV and KSRDAGKSKDEE.

Belongs to the TRAFAC class myosin-kinesin ATPase superfamily. Myosin family. Muscle myosin is a hexameric protein that consists of 2 heavy chain subunits (MHC), 2 alkali light chain subunits (MLC) and 2 regulatory light chain subunits (MLC-2).

The protein localises to the cytoplasm. The protein resides in the myofibril. Functionally, muscle contraction. The chain is Myosin heavy chain, fast skeletal muscle from Cyprinus carpio (Common carp).